Here is a 352-residue protein sequence, read N- to C-terminus: Putative DNA relaxase NicK (352 aa).

The protein belongs to the plasmid replication initiation factor family.

Functionally, probable DNA relaxase involved in the transfer of the integrative and conjugative element ICEBs1. Required for the transfer of ICEBs1. Probably mediates conjugation of ICEBs1 by nicking at oriT on the conjugative element and facilitates the translocation of a single strand of ICEBs1 DNA through a transmembrane conjugation pore into the recipient cell. This Bacillus subtilis (strain 168) protein is Putative DNA relaxase NicK (nicK).